We begin with the raw amino-acid sequence, 266 residues long: Nitrate import ATP-binding protein NrtD (266 aa).

The region spanning 3–234 (LEITDLNRVF…DEETPKNRTY (232 aa)) is the ABC transporter domain. Position 39-46 (39-46 (GASGSGKS)) interacts with ATP.

It belongs to the ABC transporter superfamily. Nitrate/nitrite/cyanate uptake transporter (NitT) (TC 3.A.1.16) family. In terms of assembly, the complex is composed of two ATP-binding proteins (NrtC and NrtD), two transmembrane proteins (NrtB) and a solute-binding protein (NrtA).

The protein localises to the cell inner membrane. The catalysed reaction is nitrate(out) + ATP + H2O = nitrate(in) + ADP + phosphate + H(+). Its function is as follows. Part of the ABC transporter complex NrtABCD involved in nitrate uptake. The complex is probably also involved in nitrite transport. Probably responsible for energy coupling to the transport system. The polypeptide is Nitrate import ATP-binding protein NrtD (nrtD) (Synechocystis sp. (strain ATCC 27184 / PCC 6803 / Kazusa)).